Reading from the N-terminus, the 567-residue chain is Urease subunit alpha (567 aa).

The region spanning 129 to 567 is the Urease domain; the sequence is GGVDSHIHFI…LPLAQRYFLF (439 aa). The Ni(2+) site is built by histidine 134, histidine 136, and lysine 217. Lysine 217 bears the N6-carboxylysine mark. Histidine 219 is a binding site for substrate. Residues histidine 246 and histidine 272 each contribute to the Ni(2+) site. Histidine 320 functions as the Proton donor in the catalytic mechanism. Aspartate 360 is a Ni(2+) binding site.

The protein belongs to the metallo-dependent hydrolases superfamily. Urease alpha subunit family. In terms of assembly, heterotrimer of UreA (gamma), UreB (beta) and UreC (alpha) subunits. Three heterotrimers associate to form the active enzyme. Ni cation is required as a cofactor. Carboxylation allows a single lysine to coordinate two nickel ions.

It is found in the cytoplasm. It catalyses the reaction urea + 2 H2O + H(+) = hydrogencarbonate + 2 NH4(+). It functions in the pathway nitrogen metabolism; urea degradation; CO(2) and NH(3) from urea (urease route): step 1/1. This is Urease subunit alpha from Pseudomonas putida (strain ATCC 700007 / DSM 6899 / JCM 31910 / BCRC 17059 / LMG 24140 / F1).